Consider the following 473-residue polypeptide: Cell division protein FtsZ homolog 2-2, chloroplastic (473 aa).

Residues 124–128 (GGGSN), 213–215 (GTG), glutamate 244, and arginine 248 each bind GTP. A Phosphothreonine; by PGK1 modification is found at threonine 282. Residue aspartate 292 coordinates GTP. The tract at residues 424–455 (EEGEGRPLQATQADASMGATRRPSSSFTEGSS) is disordered. Over residues 445–454 (RPSSSFTEGS) the composition is skewed to polar residues.

The protein belongs to the FtsZ family. As to quaternary structure, aggregates to form a contractile ring-like structure; contraction of the ring was accompanied by an increase in the filament turnover rate. Self-interacts and binds to FTSZ1 in heteropolymers to form two morphologically distinct types of filaments, termed type-I (smooth filaments) and -II (rough filaments), in a GTP-dependent manner. Part of a complex made of ARC3, ARC6, FTSZ1 and FTSZ2. Interacts (via C-terminus) with ARC6. Interacts with CDP1/PARC6. Binds to PGK1. In terms of processing, phosphorylation at Thr-282 is required for the formation of contractile ring at the chloroplast midpoint.

It is found in the plastid. The protein localises to the chloroplast stroma. It localises to the chloroplast thylakoid membrane. Its function is as follows. Exhibits GTPase activity. Component of the plastid division machinery that forms a contractile ring at the division site. Contributes to plastid division in the vegetative shoot apex, at the shoot apical meristem (SAM) where the proplastid-to-chloroplast transition takes place. The polypeptide is Cell division protein FtsZ homolog 2-2, chloroplastic (Arabidopsis thaliana (Mouse-ear cress)).